The following is a 125-amino-acid chain: Type-4 ice-structuring protein (125 aa).

The N-terminal stretch at 1–20 (MKYTLIAAIVVLALAQGTLA) is a signal peptide.

The protein belongs to the apolipoprotein A1/A4/E family.

It is found in the secreted. Antifreeze proteins lower the blood freezing point. The protein is Type-4 ice-structuring protein of Gadus morhua (Atlantic cod).